Consider the following 229-residue polypeptide: PKHD-type hydroxylase RPD_3334 (229 aa).

In terms of domain architecture, Fe2OG dioxygenase spans 78-180; the sequence is QIFPPLFNRY…RVASFFWLQS (103 aa). Histidine 98, aspartate 100, and histidine 161 together coordinate Fe cation. Arginine 171 is a 2-oxoglutarate binding site.

The cofactor is Fe(2+). Requires L-ascorbate as cofactor.

The chain is PKHD-type hydroxylase RPD_3334 from Rhodopseudomonas palustris (strain BisB5).